Reading from the N-terminus, the 187-residue chain is MPSEIAVEKKKLKNPPLQLHYLGDRVLRQPAKRIAKVDDELRQLIRDMLQTMYSKDGIGLAAPQVGIHKQLIVIDLEPDNPANPPLVLINPTIKQVSKEICVAQEGCLSIPNVYMDVKRPEVVEIAYKDENGRPKTLKATDLLARCIQHEMDHLNGVVFVDRVDNSLTLAQELSKNGFSYQAVKPVA.

Fe cation contacts are provided by Cys-107 and His-149. Residue Glu-150 is part of the active site. His-153 is a Fe cation binding site.

It belongs to the polypeptide deformylase family. Fe(2+) is required as a cofactor.

The catalysed reaction is N-terminal N-formyl-L-methionyl-[peptide] + H2O = N-terminal L-methionyl-[peptide] + formate. Functionally, removes the formyl group from the N-terminal Met of newly synthesized proteins. Requires at least a dipeptide for an efficient rate of reaction. N-terminal L-methionine is a prerequisite for activity but the enzyme has broad specificity at other positions. In Microchaete diplosiphon (Fremyella diplosiphon), this protein is Peptide deformylase.